Consider the following 289-residue polypeptide: Protease HtpX homolog (289 aa).

Helical transmembrane passes span 3-23 (IVGTILFAFYSVAIAAAWFFF) and 28-48 (TILAIAIVGSVVLVGVQYKVG). Zn(2+) is bound at residue His-129. The active site involves Glu-130. His-133 provides a ligand contact to Zn(2+). The next 2 membrane-spanning stretches (helical) occupy residues 144–164 (LGQGIASIVGIVAQYIVLFSG) and 172–192 (FLAIVVGNLVQFLVTLFVLAI). Glu-197 lines the Zn(2+) pocket. Residues 222 to 250 (SQGNEQAAQQQRQRTSRGRGRRQRGQRND) are disordered. The span at 235-246 (RTSRGRGRRQRG) shows a compositional bias: basic residues.

This sequence belongs to the peptidase M48B family. Zn(2+) serves as cofactor.

It is found in the cell membrane. This is Protease HtpX homolog from Halobacterium salinarum (strain ATCC 700922 / JCM 11081 / NRC-1) (Halobacterium halobium).